Here is a 264-residue protein sequence, read N- to C-terminus: MAVGKNKRLTKGGKKGAKKKIVDPFSKKDWYDVKAPAMFNIRNLGKTLVTRTQGTKIASDGLKGRVFEVSLADLQNDEVAFRKFKLITEDVQGKNCLTNFHGMDLTRDKMCSMVKKWQTMIEAHVDVKTTDGYLLRLFCVGFTKKRNNQIRKTSYAQHQQVRQIRKKMMEIMSREVQTNDLKEVVNKLIPDSIGKDIEKACQSIYPLHDVYARKVKMLKKPKFELGKLMELHGEGGGSGKPAADETGAKVERADGYEPPVQESV.

A disordered region spans residues 233–264; it reads GEGGGSGKPAADETGAKVERADGYEPPVQESV. Positions 242–255 are enriched in basic and acidic residues; it reads AADETGAKVERADG.

This sequence belongs to the eukaryotic ribosomal protein eS1 family. Component of the small ribosomal subunit. Mature ribosomes consist of a small (40S) and a large (60S) subunit. The 40S subunit contains about 33 different proteins and 1 molecule of RNA (18S). The 60S subunit contains about 49 different proteins and 3 molecules of RNA (28S, 5.8S and 5S). Part of the small subunit (SSU) processome, composed of more than 70 proteins and the RNA chaperone small nucleolar RNA (snoRNA) U3.

The protein localises to the cytoplasm. Its subcellular location is the nucleus. The protein resides in the nucleolus. Component of the small ribosomal subunit. The ribosome is a large ribonucleoprotein complex responsible for the synthesis of proteins in the cell. Part of the small subunit (SSU) processome, first precursor of the small eukaryotic ribosomal subunit. During the assembly of the SSU processome in the nucleolus, many ribosome biogenesis factors, an RNA chaperone and ribosomal proteins associate with the nascent pre-rRNA and work in concert to generate RNA folding, modifications, rearrangements and cleavage as well as targeted degradation of pre-ribosomal RNA by the RNA exosome. May play a role during erythropoiesis. The protein is Small ribosomal subunit protein eS1B (rps3a-b) of Xenopus laevis (African clawed frog).